The primary structure comprises 357 residues: UPF0283 membrane protein BCAN_A1047 (357 aa).

Positions 1-36 (MSDKTPRKPTAFRLEQPARVSAASEQEEPRRPRAVK) are disordered. The span at 27 to 36 (EEPRRPRAVK) shows a compositional bias: basic and acidic residues. Helical transmembrane passes span 78-98 (ILFG…TEDL) and 109-129 (LGWT…AIIL).

The protein belongs to the UPF0283 family.

The protein resides in the cell inner membrane. The polypeptide is UPF0283 membrane protein BCAN_A1047 (Brucella canis (strain ATCC 23365 / NCTC 10854 / RM-666)).